A 502-amino-acid chain; its full sequence is Probable cytosol aminopeptidase (502 aa).

Residues Lys-269 and Asp-274 each contribute to the Mn(2+) site. Lys-281 is an active-site residue. Residues Asp-292, Asp-351, and Glu-353 each contribute to the Mn(2+) site. Residue Arg-355 is part of the active site.

This sequence belongs to the peptidase M17 family. It depends on Mn(2+) as a cofactor.

The protein resides in the cytoplasm. It carries out the reaction Release of an N-terminal amino acid, Xaa-|-Yaa-, in which Xaa is preferably Leu, but may be other amino acids including Pro although not Arg or Lys, and Yaa may be Pro. Amino acid amides and methyl esters are also readily hydrolyzed, but rates on arylamides are exceedingly low.. The catalysed reaction is Release of an N-terminal amino acid, preferentially leucine, but not glutamic or aspartic acids.. Its function is as follows. Presumably involved in the processing and regular turnover of intracellular proteins. Catalyzes the removal of unsubstituted N-terminal amino acids from various peptides. The chain is Probable cytosol aminopeptidase from Vibrio vulnificus (strain CMCP6).